Reading from the N-terminus, the 340-residue chain is Heat-inducible transcription repressor HrcA (340 aa).

Belongs to the HrcA family.

Negative regulator of class I heat shock genes (grpE-dnaK-dnaJ and groELS operons). Prevents heat-shock induction of these operons. The polypeptide is Heat-inducible transcription repressor HrcA (Clavibacter michiganensis subsp. michiganensis (strain NCPPB 382)).